Reading from the N-terminus, the 1070-residue chain is DNA-directed RNA polymerase subunit beta (1070 aa).

The protein belongs to the RNA polymerase beta chain family. In terms of assembly, in plastids the minimal PEP RNA polymerase catalytic core is composed of four subunits: alpha, beta, beta', and beta''. When a (nuclear-encoded) sigma factor is associated with the core the holoenzyme is formed, which can initiate transcription.

The protein resides in the plastid. It localises to the chloroplast. It carries out the reaction RNA(n) + a ribonucleoside 5'-triphosphate = RNA(n+1) + diphosphate. In terms of biological role, DNA-dependent RNA polymerase catalyzes the transcription of DNA into RNA using the four ribonucleoside triphosphates as substrates. The chain is DNA-directed RNA polymerase subunit beta from Citrus sinensis (Sweet orange).